Consider the following 650-residue polypeptide: Gamma-tubulin complex component 4 homolog (650 aa).

Residue Ser-214 is modified to Phosphoserine. Thr-216 is subject to Phosphothreonine. Residue Ser-218 is modified to Phosphoserine.

This sequence belongs to the TUBGCP family.

Its subcellular location is the cytoplasm. It is found in the cytoskeleton. It localises to the microtubule organizing center. The protein localises to the centrosome. Its function is as follows. Gamma-tubulin complex is necessary for microtubule nucleation at the centrosome. In Drosophila melanogaster (Fruit fly), this protein is Gamma-tubulin complex component 4 homolog (Grip75).